The sequence spans 298 residues: N-acetylmuramic acid 6-phosphate etherase (298 aa).

The region spanning 55–218 (IHAQVSGGGR…STGLMIKSGK (164 aa)) is the SIS domain. The active-site Proton donor is the E83. The active site involves E114.

It belongs to the GCKR-like family. MurNAc-6-P etherase subfamily. As to quaternary structure, homodimer.

It catalyses the reaction N-acetyl-D-muramate 6-phosphate + H2O = N-acetyl-D-glucosamine 6-phosphate + (R)-lactate. It participates in amino-sugar metabolism; 1,6-anhydro-N-acetylmuramate degradation. It functions in the pathway amino-sugar metabolism; N-acetylmuramate degradation. Its pathway is cell wall biogenesis; peptidoglycan recycling. Functionally, specifically catalyzes the cleavage of the D-lactyl ether substituent of MurNAc 6-phosphate, producing GlcNAc 6-phosphate and D-lactate. Together with AnmK, is also required for the utilization of anhydro-N-acetylmuramic acid (anhMurNAc) either imported from the medium or derived from its own cell wall murein, and thus plays a role in cell wall recycling. The protein is N-acetylmuramic acid 6-phosphate etherase of Shigella flexneri.